Here is an 89-residue protein sequence, read N- to C-terminus: UPF0298 protein GK1096 (89 aa).

It belongs to the UPF0298 family.

It localises to the cytoplasm. This Geobacillus kaustophilus (strain HTA426) protein is UPF0298 protein GK1096.